The sequence spans 147 residues: Protein Turandot Z (147 aa).

The N-terminal stretch at 1–23 (MYFAIRLSFVLAVLICLTGNGSA) is a signal peptide.

The protein belongs to the Turandot family.

The protein localises to the secreted. In terms of biological role, a humoral factor that may play a role in stress tolerance. This chain is Protein Turandot Z, found in Drosophila melanogaster (Fruit fly).